A 98-amino-acid polypeptide reads, in one-letter code: Large ribosomal subunit protein eL21 (98 aa).

It belongs to the eukaryotic ribosomal protein eL21 family.

This chain is Large ribosomal subunit protein eL21, found in Methanocorpusculum labreanum (strain ATCC 43576 / DSM 4855 / Z).